A 244-amino-acid polypeptide reads, in one-letter code: Carbonyl reductase [NADPH] 2 (244 aa).

Position 11-39 (11-39 (LVTGAGKGIGRDTVKALHVSGARVVAVTR)) interacts with NADP(+). Ser136 lines the substrate pocket. The active-site Proton acceptor is Tyr149. Phosphoserine is present on Ser176.

It belongs to the short-chain dehydrogenases/reductases (SDR) family. As to quaternary structure, homotetramer. In terms of tissue distribution, lung (ciliated cells, non-ciliated bronchiolar cells and type-II alveolar pneumocytes). Low expression in all extrapulmonary tissues, including adipose tissue.

It is found in the mitochondrion matrix. It catalyses the reaction a secondary alcohol + NADP(+) = a ketone + NADPH + H(+). With respect to regulation, allosteric enzyme exhibiting negative cooperativity. Activated 2-5 fold by fatty acids. Functionally, may function in the pulmonary metabolism of endogenous carbonyl compounds, such as aliphatic aldehydes and ketones derived from lipid peroxidation, 3-ketosteroids and fatty aldehydes, as well as in xenobiotic metabolism. In Sus scrofa (Pig), this protein is Carbonyl reductase [NADPH] 2 (CBR2).